A 603-amino-acid polypeptide reads, in one-letter code: Pyruvate oxidase (603 aa).

The core stretch occupies residues methionine 1–threonine 191. Residues proline 192–serine 342 form an FAD-binding region. The segment at threonine 343–phenylalanine 603 is thiamine pyrophosphate binding. 3 residues coordinate Mg(2+): aspartate 447, asparagine 474, and glutamine 476.

The protein belongs to the TPP enzyme family. As to quaternary structure, homotetramer. The cofactor is FAD. It depends on Mg(2+) as a cofactor. Requires thiamine diphosphate as cofactor.

The catalysed reaction is pyruvate + phosphate + O2 + H(+) = acetyl phosphate + H2O2 + CO2. Functionally, important for the aerobic growth. Decarboxylates pyruvate in four steps. The energy released is partially stored in acetyl phosphate. The sequence is that of Pyruvate oxidase (pox5) from Lactiplantibacillus plantarum (strain ATCC BAA-793 / NCIMB 8826 / WCFS1) (Lactobacillus plantarum).